Consider the following 489-residue polypeptide: Retinoblastoma-binding protein 5 homolog (489 aa).

WD repeat units lie at residues 22-63 (DCIS…KIIS), 64-103 (AHVH…LEHK), 147-187 (DSDG…VVAS), 195-234 (SSAT…TLGK), 248-290 (VNKT…KILH), and 292-330 (TKGE…NWSA). Positions 451–489 (DVSLPDAPTDETHPLISSKASKDKQQPVGGKKAAGRTKK) are disordered.

In terms of assembly, core component of several methyltransferase-containing complexes. Component of the SET1 complex, composed at least of the catalytic subunit Set1, wds/WDR5, Wdr82, Rbbp5, ash2, Cfp1/CXXC1, hcf and Dpy-30L1. Component of the MLL3/4 complex composed at least of the catalytic subunit trr, ash2, Rbbp5, Dpy-30L1, wds, hcf, ptip, Pa1, Utx, Lpt and Ncoa6.

It localises to the nucleus. Component of the SET1 complex that specifically di- and trimethylates 'Lys-4' of histone H3 and of the MLL3/4 complex which also methylates histone H3 'Lys-4'. In Drosophila melanogaster (Fruit fly), this protein is Retinoblastoma-binding protein 5 homolog.